We begin with the raw amino-acid sequence, 136 residues long: ATP synthase F(0) complex subunit C1, mitochondrial (136 aa).

Residues 1–61 (MQTAGALFIS…REFQTSVVSR (61 aa)) constitute a mitochondrion transit peptide. A helical transmembrane segment spans residues 77-97 (VGVAGSGAGIGTVFGSLIIGY). N6,N6,N6-trimethyllysine is present on Lys104. Residues 112–132 (ILGFALSEAMGLFCLMVAFLI) form a helical membrane-spanning segment.

Belongs to the ATPase C chain family. As to quaternary structure, homooctamer; the c-ring consists of eight c subunits forming a circle, and each subunit adopts a hairpin shape. Component of the ATP synthase complex composed at least of ATP5F1A/subunit alpha, ATP5F1B/subunit beta, ATP5MC1/subunit c (homooctomer), MT-ATP6/subunit a, MT-ATP8/subunit 8, ATP5ME/subunit e, ATP5MF/subunit f, ATP5MG/subunit g, ATP5MK/subunit k, ATP5MJ/subunit j, ATP5F1C/subunit gamma, ATP5F1D/subunit delta, ATP5F1E/subunit epsilon, ATP5PF/subunit F6, ATP5PB/subunit b, ATP5PD/subunit d, ATP5PO/subunit OSCP. ATP synthase complex consists of a soluble F(1) head domain (subunits alpha(3) and beta(3)) - the catalytic core - and a membrane F(0) domain - the membrane proton channel (subunits c, a, 8, e, f, g, k and j). These two domains are linked by a central stalk (subunits gamma, delta, and epsilon) rotating inside the F1 region and a stationary peripheral stalk (subunits F6, b, d, and OSCP). Interacts with TMEM70 (homooligomer form); this interaction facilitates the oligomer formation of subunit c/ATP5MC1 (c-ring) and the c-ring membrane insertion and also protects ATP5MC1 against intramitochondrial proteolysis. Post-translationally, trimethylated by ATPSCKMT at Lys-104. Methylation is required for proper incorporation of the C subunit into the ATP synthase complex and mitochondrial respiration.

The protein resides in the mitochondrion membrane. It catalyses the reaction H(+)(in) = H(+)(out). Its function is as follows. Subunit c, of the mitochondrial membrane ATP synthase complex (F(1)F(0) ATP synthase or Complex V) that produces ATP from ADP in the presence of a proton gradient across the membrane which is generated by electron transport complexes of the respiratory chain. ATP synthase complex consist of a soluble F(1) head domain - the catalytic core - and a membrane F(1) domain - the membrane proton channel. These two domains are linked by a central stalk rotating inside the F(1) region and a stationary peripheral stalk. During catalysis, ATP synthesis in the catalytic domain of F(1) is coupled via a rotary mechanism of the central stalk subunits to proton translocation. With the subunit a (MT-ATP6), forms the proton-conducting channel in the F(0) domain, that contains two crucial half-channels (inlet and outlet) that facilitate proton movement from the mitochondrial intermembrane space (IMS) into the matrix. Protons are taken up via the inlet half-channel and released through the outlet half-channel, following a Grotthuss mechanism. The sequence is that of ATP synthase F(0) complex subunit C1, mitochondrial from Homo sapiens (Human).